Here is a 199-residue protein sequence, read N- to C-terminus: Recombination protein RecR (199 aa).

The C4-type zinc finger occupies 57–72; it reads CQKCRTFTEQSLCPIC. The region spanning 81-176 is the Toprim domain; sequence DTLCVVETPA…AVSRIAHGVP (96 aa).

The protein belongs to the RecR family.

In terms of biological role, may play a role in DNA repair. It seems to be involved in an RecBC-independent recombinational process of DNA repair. It may act with RecF and RecO. The polypeptide is Recombination protein RecR (Shewanella amazonensis (strain ATCC BAA-1098 / SB2B)).